Consider the following 386-residue polypeptide: Sulfate adenylyltransferase (386 aa).

It belongs to the sulfate adenylyltransferase family.

It catalyses the reaction sulfate + ATP + H(+) = adenosine 5'-phosphosulfate + diphosphate. The protein operates within sulfur metabolism; hydrogen sulfide biosynthesis; sulfite from sulfate: step 1/3. This chain is Sulfate adenylyltransferase, found in Persephonella marina (strain DSM 14350 / EX-H1).